Consider the following 247-residue polypeptide: uncharacterized protein (247 aa).

Residues 1–35 (MWGPGVTAEGLSVAPAPPPLLPLLLLLALALVAPS) form the signal peptide. An N-linked (GlcNAc...) asparagine glycan is attached at Asn57. A helical transmembrane segment spans residues 82-102 (LSGLLILLVLFAIGYFLQRII). The tract at residues 109–179 (YPRGQARPGQ…GGRSDPSCAS (71 aa)) is disordered. A compositionally biased stretch (gly residues) spans 160–172 (SGGGGRGRGGGGR).

The protein resides in the membrane. This is an uncharacterized protein from Homo sapiens (Human).